Here is a 398-residue protein sequence, read N- to C-terminus: uncharacterized protein (398 aa).

Position 212 is an N6-(pyridoxal phosphate)lysine (Lys212).

This sequence belongs to the trans-sulfuration enzymes family. The cofactor is pyridoxal 5'-phosphate.

This is an uncharacterized protein from Schizosaccharomyces pombe (strain 972 / ATCC 24843) (Fission yeast).